The chain runs to 189 residues: Phomopsin biosynthesis cluster protein D (189 aa).

It belongs to the oryJ family.

In terms of biological role, part of the gene cluster that mediates the biosynthesis of the phomopsins, a group of hexapeptide mycotoxins which infects lupins and causes lupinosis disease in livestock. The role of phomC within the phomopsins biosynthesis pathway has still to be determined. The pathway starts with the processing of the precursor phomA by several endopeptidases including kexin proteases as well as the cluster-specific S41 family peptidase phomP1 and the oligopeptidase phomG to produce 10 identical copies of the hexapeptide Tyr-Val-Ile-Pro-Ile-Asp. After being excised from the precursor peptide, the core peptides are cyclized and modified post-translationally by enzymes encoded within the gene cluster. The timing and order of proteolysis of the phomA precursor and PTMs are still unknown. Two tyrosinase-like enzymes, phomQ1 and phomQ2, catalyze the chlorination and hydroxylation of Tyr, respectively. PhomYb, is proposed to be involved in the construction of the macrocyclic structure. The other 4 ustYa family proteins may be involved in PTMs that generate the unique structure of phomopsin A. PhomYa is required for the hydroxylation of C-beta of Tyr. PhomYc, phomYd, and phomYe are responsible for the biosynthesis of 2,3-dehydroisoleucine (dIle), 2,3-dehydroaspartic acid (dAsp), and 3,4-dehydroproline (dPro), respectively. While dIle formation by phomYc is indispensable for the installation of dAsp by phomYd, the order of the other PTMs have not been elucidated yet. Most of the biosynthetic enzymes likely have broad substrate specificity, and thus, there might be a metabolic grid from a precursor to phomopsin A. The enzyme(s) responsible for the biosynthesis of 3,4-dehydrovaline (dVal) have also not been identified yet. Finally, phomM acts as an S-adenosylmethionine-dependent alpha-N-methyltransferase that catalyzes two successive N-methylation reactions, converting N-desmethyl-phomopsin A to phomopsin A and phomopsin A further to an N,N-dimethylated congener called phomopsin E. The sequence is that of Phomopsin biosynthesis cluster protein D from Diaporthe leptostromiformis (Lupinosis disease fungus).